The following is a 548-amino-acid chain: Natural resistance-associated macrophage protein 1 (548 aa).

The segment at 1–38 (MSGDTGPPKQGGTRYGSISSPPSPEPQQAPPGGTYLSE) is disordered. Topologically, residues 1 to 55 (MSGDTGPPKQGGTRYGSISSPPSPEPQQAPPGGTYLSEKIPIPDTESGTFSLRKL) are cytoplasmic. Residues 56 to 73 (WAFTGPGFLMSIAFLDPG) form a helical membrane-spanning segment. The Extracellular segment spans residues 74 to 82 (NIESDLQAG). A helical membrane pass occupies residues 83–102 (AVAGFKLLWVLLWATVLGLL). Over 103–139 (CQRLAARLGVVTGKDLGEVCHLYYPKVPRILLWLTIE) the chain is Cytoplasmic. A helical membrane pass occupies residues 140–160 (LAIVGSDMQEVIGTAIAFSLL). Topologically, residues 161-164 (SAGR) are extracellular. A helical transmembrane segment spans residues 165 to 184 (IPLWGGVLITVVDTFFFLFL). Residues 185–193 (DNYGLRKLE) lie on the Cytoplasmic side of the membrane. The chain crosses the membrane as a helical span at residues 194 to 214 (AFFGFLITIMALTFGYEYVVA). Residues 215–237 (QPAQGALLQGLFLPSCPGCGQPE) lie on the Extracellular side of the membrane. Residues 238–256 (LLQAVGIIGAIIMPHNIYL) form a helical membrane-spanning segment. Residues 257-284 (HSSLVKSREVDRSRRADIREANMYFLIE) lie on the Cytoplasmic side of the membrane. The helical transmembrane segment at 285–304 (ATIALSVSFLINLFVMAVFG) threads the bilayer. Topologically, residues 305-346 (QAFYKQTNQAAFNICADSSLHDYAPIFPRNNLTVAVDIYQGG) are extracellular. Asn-335 is a glycosylation site (N-linked (GlcNAc...) asparagine). Residues 347–366 (VILGCLFGPPALYIWAVGLL) traverse the membrane as a helical segment. Topologically, residues 367 to 397 (AAGQSSTMTGTYAGQFVMEGFLKLRWSRFAR) are cytoplasmic. A helical membrane pass occupies residues 398–415 (VLLTRSCAILPTVLLAVF). The Extracellular portion of the chain corresponds to 416 to 426 (RDLRDLSGLND). A helical membrane pass occupies residues 427–447 (LLNVLQSLLLPFAVLPILTFT). Over 448–463 (SMPALMQEFANGLVSK) the chain is Cytoplasmic. A helical transmembrane segment spans residues 464-485 (VITSSIMVLVCAVNLYFVISYL). Residues 486–493 (PSLPHPAY) lie on the Extracellular side of the membrane. A helical membrane pass occupies residues 494-513 (FSLVALLAAAYLGLTTYLVW). Residues 514-548 (TCLITQGATLLAHSSHQRFLYGLPEEDQEKGRTSG) lie on the Cytoplasmic side of the membrane.

The protein belongs to the NRAMP family.

Its subcellular location is the late endosome membrane. The protein resides in the lysosome membrane. The enzyme catalyses Zn(2+)(in) + H(+)(out) = Zn(2+)(out) + H(+)(in). It carries out the reaction Fe(2+)(in) + H(+)(out) = Fe(2+)(out) + H(+)(in). It catalyses the reaction Mn(2+)(in) + H(+)(out) = Mn(2+)(out) + H(+)(in). Macrophage-specific antiporter that fluxes metal ions in either direction against a proton gradient. Localized to late endosomal lysosomal membranes, delivers bivalent cations from the cytosol into these acidic compartments where they may directly affect antimicrobial activity. Involved in iron metabolism and host natural resistance to infection with intracellular parasites. Pathogen resistance involves sequestration of Fe(2+) and Mn(2+), cofactors of both prokaryotic and eukaryotic catalases and superoxide dismutases, not only to protect the macrophage against its own generation of reactive oxygen species, but to deny the cations to the pathogen for synthesis of its protective enzymes. This Bos taurus (Bovine) protein is Natural resistance-associated macrophage protein 1 (SLC11A1).